A 113-amino-acid polypeptide reads, in one-letter code: U11-theraphotoxin-Hhn1r (113 aa).

Positions 1-21 (MNTVRVTFLLVFVLAVSLGQA) are cleaved as a signal peptide. Residues 22–74 (DKDENRMEMQEKTEQGKSYLDFAENLLLQKLEELEAKLLEEDSEESRNSRQKR) constitute a propeptide that is removed on maturation. A disordered region spans residues 61–83 (EEDSEESRNSRQKRCIGEGVPCD). 3 disulfides stabilise this stretch: Cys75–Cys90, Cys82–Cys95, and Cys89–Cys110.

The protein belongs to the neurotoxin 14 (magi-1) family. 01 (HNTX-16) subfamily. In terms of tissue distribution, expressed by the venom gland.

The protein resides in the secreted. Functionally, probable ion channel inhibitor. In Cyriopagopus hainanus (Chinese bird spider), this protein is U11-theraphotoxin-Hhn1r.